A 476-amino-acid polypeptide reads, in one-letter code: Aspartyl/glutamyl-tRNA(Asn/Gln) amidotransferase subunit B (476 aa).

The protein belongs to the GatB/GatE family. GatB subfamily. In terms of assembly, heterotrimer of A, B and C subunits.

It catalyses the reaction L-glutamyl-tRNA(Gln) + L-glutamine + ATP + H2O = L-glutaminyl-tRNA(Gln) + L-glutamate + ADP + phosphate + H(+). The enzyme catalyses L-aspartyl-tRNA(Asn) + L-glutamine + ATP + H2O = L-asparaginyl-tRNA(Asn) + L-glutamate + ADP + phosphate + 2 H(+). In terms of biological role, allows the formation of correctly charged Asn-tRNA(Asn) or Gln-tRNA(Gln) through the transamidation of misacylated Asp-tRNA(Asn) or Glu-tRNA(Gln) in organisms which lack either or both of asparaginyl-tRNA or glutaminyl-tRNA synthetases. The reaction takes place in the presence of glutamine and ATP through an activated phospho-Asp-tRNA(Asn) or phospho-Glu-tRNA(Gln). This is Aspartyl/glutamyl-tRNA(Asn/Gln) amidotransferase subunit B from Oleidesulfovibrio alaskensis (strain ATCC BAA-1058 / DSM 17464 / G20) (Desulfovibrio alaskensis).